The primary structure comprises 98 residues: Cytochrome c-552 (98 aa).

The N-terminal stretch at 1–18 (MKKFLLVAVVGLAGITFA) is a signal peptide. Residues C28, C31, H32, and M77 each contribute to the heme c site.

Belongs to the cytochrome c family. Post-translationally, binds 1 heme c group covalently per subunit.

In terms of biological role, reacts with hydrogenase. This chain is Cytochrome c-552, found in Hydrogenobacter thermophilus (strain DSM 6534 / IAM 12695 / TK-6).